Here is a 257-residue protein sequence, read N- to C-terminus: NH(3)-dependent NAD(+) synthetase (257 aa).

ATP is bound at residue 40-47 (GISGGIDS). Residue Asp-46 coordinates Mg(2+). Arg-121 is a deamido-NAD(+) binding site. An ATP-binding site is contributed by Thr-141. Glu-146 contacts Mg(2+). Deamido-NAD(+)-binding residues include Lys-154 and Asp-161. ATP-binding residues include Lys-170 and Ser-192. Deamido-NAD(+) is bound at residue 238–239 (HK).

Belongs to the NAD synthetase family. As to quaternary structure, homodimer.

It catalyses the reaction deamido-NAD(+) + NH4(+) + ATP = AMP + diphosphate + NAD(+) + H(+). It participates in cofactor biosynthesis; NAD(+) biosynthesis; NAD(+) from deamido-NAD(+) (ammonia route): step 1/1. Catalyzes the ATP-dependent amidation of deamido-NAD to form NAD. Uses ammonia as a nitrogen source. The polypeptide is NH(3)-dependent NAD(+) synthetase (Mycoplasmopsis pulmonis (strain UAB CTIP) (Mycoplasma pulmonis)).